The primary structure comprises 88 residues: MTELFNPDNPWETALLFFAVFCSVLPALLPFWFKIKKIDSQVSNSHDENLRDEITRGFKEVREDIRLLHEALNIERRERIAGDEKRCA.

This is Gene 30 protein (30) from Mycobacterium (Mycobacteriophage D29).